Consider the following 407-residue polypeptide: Phosphopentomutase (407 aa).

6 residues coordinate Mn(2+): D10, D306, H311, D347, H348, and H359.

This sequence belongs to the phosphopentomutase family. Mn(2+) serves as cofactor.

Its subcellular location is the cytoplasm. It catalyses the reaction 2-deoxy-alpha-D-ribose 1-phosphate = 2-deoxy-D-ribose 5-phosphate. It carries out the reaction alpha-D-ribose 1-phosphate = D-ribose 5-phosphate. It participates in carbohydrate degradation; 2-deoxy-D-ribose 1-phosphate degradation; D-glyceraldehyde 3-phosphate and acetaldehyde from 2-deoxy-alpha-D-ribose 1-phosphate: step 1/2. Its function is as follows. Isomerase that catalyzes the conversion of deoxy-ribose 1-phosphate (dRib-1-P) and ribose 1-phosphate (Rib-1-P) to deoxy-ribose 5-phosphate (dRib-5-P) and ribose 5-phosphate (Rib-5-P), respectively. This is Phosphopentomutase from Salmonella dublin (strain CT_02021853).